Here is a 434-residue protein sequence, read N- to C-terminus: UPF0597 protein CLI_2075 (434 aa).

It belongs to the UPF0597 family.

The sequence is that of UPF0597 protein CLI_2075 from Clostridium botulinum (strain Langeland / NCTC 10281 / Type F).